Reading from the N-terminus, the 376-residue chain is MTDSDSPAIVIDNGSGMCKAGIAGDDAPRAAFPSIIGRPKMPGIMVGMDQKECYVGEEAQAKRGVLNLKYPIEHGIVTDYDDMEKIWHHCFYNELRVTPEEHPCLLTEAPQNPKLNREKMTKTMFETFNVPSFYVAIQAVLSLYASGRTTGIVVDSGDGVTHTVSIYEGYALPHAILRIDLAGRDLTEYCMKLLYEIGLNFSSTAEREIIRDIKEKLCYVALDYESELKAYKESSTNDKSYELPDGNTITVQDQRFRCPELLFKPAFIGKEFPGIHELTFNSIMKCDVDVRKDLYNNIVLSGGTTMFPGIAERLSKEVSALAPSSMKIKVVAPPERRYSVWIGGSILSSLSTFQTMWITKAEYDESGPSIVHRKCF.

This sequence belongs to the actin family.

It is found in the cytoplasm. The protein localises to the cytoskeleton. It catalyses the reaction ATP + H2O = ADP + phosphate + H(+). In terms of biological role, actins are highly conserved proteins that are involved in various types of cell motility and are ubiquitously expressed in all eukaryotic cells. In Tetrahymena pyriformis, this protein is Actin, cytoplasmic.